Reading from the N-terminus, the 637-residue chain is Chaperone protein HtpG (637 aa).

The interval 1-345 (MSQQETHGFQ…SNDLPLNVSR (345 aa)) is a; substrate-binding. Residues 346–562 (EILQDNHITK…EGEMSTQMIK (217 aa)) form a b region. Positions 563–637 (LMQAAGQPVP…MNQMLLANMK (75 aa)) are c.

The protein belongs to the heat shock protein 90 family. Homodimer.

The protein resides in the cytoplasm. Its function is as follows. Molecular chaperone. Has ATPase activity. The chain is Chaperone protein HtpG from Shewanella sp. (strain W3-18-1).